The chain runs to 248 residues: Ribonuclease PH (248 aa).

Phosphate-binding positions include R86 and G124–R126.

Belongs to the RNase PH family. Homohexameric ring arranged as a trimer of dimers.

It catalyses the reaction tRNA(n+1) + phosphate = tRNA(n) + a ribonucleoside 5'-diphosphate. In terms of biological role, phosphorolytic 3'-5' exoribonuclease that plays an important role in tRNA 3'-end maturation. Removes nucleotide residues following the 3'-CCA terminus of tRNAs; can also add nucleotides to the ends of RNA molecules by using nucleoside diphosphates as substrates, but this may not be physiologically important. Probably plays a role in initiation of 16S rRNA degradation (leading to ribosome degradation) during starvation. This Clostridium perfringens (strain 13 / Type A) protein is Ribonuclease PH.